The following is a 584-amino-acid chain: Breast carcinoma-amplified sequence 1 (584 aa).

Disordered regions lie at residues 1 to 29 (MGNQ…NASA), 59 to 280 (VATS…AAAI), and 297 to 377 (PNKA…GKLF). Polar residues-rich tracts occupy residues 59-69 (VATSSPETTEI) and 112-128 (ADSS…SNKA). Ser124 and Ser192 each carry phosphoserine. Composition is skewed to basic and acidic residues over residues 186–226 (SKPK…KVDE), 238–252 (PAGK…KEGQ), and 300–311 (AETKKDPEDTGA). Ser314 carries the phosphoserine modification. The segment covering 314–354 (SPTTSADLKSDKANFTSQETQGAGKNSKGCNPSGHTQSVTT) has biased composition (polar residues). Positions 357 to 366 (PAKEGTKEKS) are enriched in basic and acidic residues. 2 positions are modified to phosphoserine: Ser381 and Ser399. Positions 415-584 (TVDLNEGDAA…VSIGPVGKSK (170 aa)) are disordered. Residues 428 to 439 (TEAKLKREESKP) are compositionally biased toward basic and acidic residues. A Phosphothreonine modification is found at Thr480. The segment covering 494–506 (KGKEGSSKDKKSA) has biased composition (basic and acidic residues). Positions 525 to 540 (CTEQATVDTNSLQNGD) are enriched in polar residues. The span at 541-550 (KLQKRPEKRQ) shows a compositional bias: basic and acidic residues. Residue Ser552 is modified to Phosphoserine. An interacts with DYNLL1 and DYNLL2 region spans residues 565-584 (MLDAQVQTDPVSIGPVGKSK).

In terms of assembly, homodimer. Interacts with DYNLL1 and DYNLL2. As to expression, highly expressed in the brain and, more specifically, in oligodendrocytes (at protein level). Expressed in the prostate, and at lower levels in testis, intestine and colon. Overexpressed in most breast cancer cell lines and down-regulated in some colorectal tumors.

Its subcellular location is the cytoplasm. In terms of biological role, required for myelination. The chain is Breast carcinoma-amplified sequence 1 (BCAS1) from Homo sapiens (Human).